The primary structure comprises 245 residues: Outer membrane protein assembly factor BamD (245 aa).

An N-terminal signal peptide occupies residues 1–19 (MTRMKYLVAAATLSLFLAG). A lipid anchor (N-palmitoyl cysteine) is attached at C20. The S-diacylglycerol cysteine moiety is linked to residue C20.

This sequence belongs to the BamD family. In terms of assembly, part of the Bam complex, which is composed of the outer membrane protein BamA, and four lipoproteins BamB, BamC, BamD and BamE.

It is found in the cell outer membrane. Part of the outer membrane protein assembly complex, which is involved in assembly and insertion of beta-barrel proteins into the outer membrane. Constitutes, with BamA, the core component of the assembly machinery. This chain is Outer membrane protein assembly factor BamD, found in Escherichia coli O157:H7.